We begin with the raw amino-acid sequence, 85 residues long: Toxin BmKT (85 aa).

The first 19 residues, 1–19 (MNYLVFFSLALLLMTGVES), serve as a signal peptide directing secretion. The LCN-type CS-alpha/beta domain occupies 21-83 (RDGYIADDKN…VPIRVPGKCN (63 aa)). 4 disulfides stabilise this stretch: Cys-31/Cys-82, Cys-35/Cys-55, Cys-41/Cys-65, and Cys-45/Cys-67.

This sequence belongs to the long (4 C-C) scorpion toxin superfamily. Sodium channel inhibitor family. Alpha subfamily. As to expression, expressed by the venom gland.

It is found in the secreted. Binds to sodium channels (Nav) and inhibits the inactivation of the activated channels, thereby blocking neuronal transmission. Tested on mice, has antitumor effect and strong inhibitory effect on pain. This chain is Toxin BmKT, found in Olivierus martensii (Manchurian scorpion).